Reading from the N-terminus, the 282-residue chain is Nucleotide-binding protein in ptsN-ptsO intergenic region (282 aa).

ATP is bound at residue G8 to S15. GTP is bound at residue D56–N59.

The protein belongs to the RapZ-like family.

Its function is as follows. Displays ATPase and GTPase activities. In Shewanella violacea, this protein is Nucleotide-binding protein in ptsN-ptsO intergenic region.